Reading from the N-terminus, the 179-residue chain is Large ribosomal subunit protein uL6 (179 aa).

Belongs to the universal ribosomal protein uL6 family. Part of the 50S ribosomal subunit.

Functionally, this protein binds to the 23S rRNA, and is important in its secondary structure. It is located near the subunit interface in the base of the L7/L12 stalk, and near the tRNA binding site of the peptidyltransferase center. The polypeptide is Large ribosomal subunit protein uL6 (Mycolicibacterium vanbaalenii (strain DSM 7251 / JCM 13017 / BCRC 16820 / KCTC 9966 / NRRL B-24157 / PYR-1) (Mycobacterium vanbaalenii)).